A 143-amino-acid polypeptide reads, in one-letter code: Large ribosomal subunit protein uL15 (143 aa).

The segment at 1 to 59 (MELNTITPGQGAKHAKRRVGRGIGSGLGKTAGRGHKGQKSRSGGYHKVGFEGGQMPMQR) is disordered. Residues 21-31 (RGIGSGLGKTA) show a composition bias toward gly residues.

The protein belongs to the universal ribosomal protein uL15 family. As to quaternary structure, part of the 50S ribosomal subunit.

Functionally, binds to the 23S rRNA. The sequence is that of Large ribosomal subunit protein uL15 from Polaromonas naphthalenivorans (strain CJ2).